The chain runs to 201 residues: Large ribosomal subunit protein bL25 (201 aa).

Positions 179–201 (VSITAPRVEAEKTEEEEPESTEE) are disordered. Residues 190–201 (KTEEEEPESTEE) show a composition bias toward acidic residues.

This sequence belongs to the bacterial ribosomal protein bL25 family. CTC subfamily. As to quaternary structure, part of the 50S ribosomal subunit; part of the 5S rRNA/L5/L18/L25 subcomplex. Contacts the 5S rRNA. Binds to the 5S rRNA independently of L5 and L18.

Functionally, this is one of the proteins that binds to the 5S RNA in the ribosome where it forms part of the central protuberance. This is Large ribosomal subunit protein bL25 from Prosthecochloris aestuarii (strain DSM 271 / SK 413).